Reading from the N-terminus, the 179-residue chain is Large ribosomal subunit protein uL5 (179 aa).

It belongs to the universal ribosomal protein uL5 family. Part of the 50S ribosomal subunit; part of the 5S rRNA/L5/L18/L25 subcomplex. Contacts the 5S rRNA and the P site tRNA. Forms a bridge to the 30S subunit in the 70S ribosome.

This is one of the proteins that bind and probably mediate the attachment of the 5S RNA into the large ribosomal subunit, where it forms part of the central protuberance. In the 70S ribosome it contacts protein S13 of the 30S subunit (bridge B1b), connecting the 2 subunits; this bridge is implicated in subunit movement. Contacts the P site tRNA; the 5S rRNA and some of its associated proteins might help stabilize positioning of ribosome-bound tRNAs. The sequence is that of Large ribosomal subunit protein uL5 from Variovorax paradoxus (strain S110).